Here is a 252-residue protein sequence, read N- to C-terminus: 5'-nucleotidase SurE (252 aa).

Asp8, Asp9, Ser39, and Asn95 together coordinate a divalent metal cation.

It belongs to the SurE nucleotidase family. A divalent metal cation serves as cofactor.

Its subcellular location is the cytoplasm. It catalyses the reaction a ribonucleoside 5'-phosphate + H2O = a ribonucleoside + phosphate. In terms of biological role, nucleotidase that shows phosphatase activity on nucleoside 5'-monophosphates. The sequence is that of 5'-nucleotidase SurE from Clostridium botulinum (strain Okra / Type B1).